We begin with the raw amino-acid sequence, 147 residues long: MDVLHAHDLYGEQLIDRVGDAVNEDAGDDLDTLVEGQQQQRLGVYRQMDILLDAPQEPPLGVFPAQGGPNGPPRLRKKRSFYTMTKPTPPCQSQEPEMCVLMASVTRAMRHVREDQRGEYFANYLVENMTSQNYPNGVGLPQHWGQL.

Residues 57-76 (EPPLGVFPAQGGPNGPPRLR) form a disordered region. Asparagine 128 is a glycosylation site (N-linked (GlcNAc...) asparagine).

This sequence belongs to the male-specific scotti family.

Its function is as follows. Post-meiotically transcribed gene that has a role in late spermiogenesis; required for actin cone progression during spermatid individualization. This Drosophila simulans (Fruit fly) protein is Male-specific protein scotti.